The primary structure comprises 476 residues: Aspartyl/glutamyl-tRNA(Asn/Gln) amidotransferase subunit B (476 aa).

The protein belongs to the GatB/GatE family. GatB subfamily. As to quaternary structure, heterotrimer of A, B and C subunits.

It catalyses the reaction L-glutamyl-tRNA(Gln) + L-glutamine + ATP + H2O = L-glutaminyl-tRNA(Gln) + L-glutamate + ADP + phosphate + H(+). It carries out the reaction L-aspartyl-tRNA(Asn) + L-glutamine + ATP + H2O = L-asparaginyl-tRNA(Asn) + L-glutamate + ADP + phosphate + 2 H(+). In terms of biological role, allows the formation of correctly charged Asn-tRNA(Asn) or Gln-tRNA(Gln) through the transamidation of misacylated Asp-tRNA(Asn) or Glu-tRNA(Gln) in organisms which lack either or both of asparaginyl-tRNA or glutaminyl-tRNA synthetases. The reaction takes place in the presence of glutamine and ATP through an activated phospho-Asp-tRNA(Asn) or phospho-Glu-tRNA(Gln). This chain is Aspartyl/glutamyl-tRNA(Asn/Gln) amidotransferase subunit B, found in Lacticaseibacillus casei (strain BL23) (Lactobacillus casei).